Consider the following 66-residue polypeptide: Large ribosomal subunit protein bL33c (66 aa).

The protein belongs to the bacterial ribosomal protein bL33 family.

Its subcellular location is the plastid. It is found in the chloroplast. The sequence is that of Large ribosomal subunit protein bL33c from Citrus sinensis (Sweet orange).